The primary structure comprises 352 residues: MHIQEFHQALADIGARPCHIGRINRAWLKGLPLDAGTRHQKSEDYFPLSVREGLAPIAARIEKLARIHSRHDADDGSLRLLVGLGDGQMVESVLLPRDGLCVSSQVGCAVGCTFCMTGKSGLLRQLGSAEIAAQVALARRIRPVKKVVFMGMGEPAHNMENVLEAIQWLGTDGNIGHKNLVFSTVGDARVFERLPQLEVKPALALSLHTTRADLREQLLPRAPRIAPAELVELGEAYARRVGYPIQYQWTLLAGVNDSQEEMDAAARLLKGKYGVLNIIPYNSVEGDRFQRPSSERVQAIKRYLHDNGVLTKVRDSAGQDVDGGCGQLRARAAHVIDASRLRRREQAGVSAG.

Glu91 serves as the catalytic Proton acceptor. In terms of domain architecture, Radical SAM core spans 94–320; it reads LLPRDGLCVS…TKVRDSAGQD (227 aa). A disulfide bridge links Cys101 with Cys325. Residues Cys108, Cys112, and Cys115 each contribute to the [4Fe-4S] cluster site. S-adenosyl-L-methionine contacts are provided by residues 153–154, Ser183, 206–208, and Asn282; these read GE and SLH. Cys325 serves as the catalytic S-methylcysteine intermediate.

The protein belongs to the radical SAM superfamily. RlmN family. The cofactor is [4Fe-4S] cluster.

The protein localises to the cytoplasm. The sequence is that of Probable RNA methyltransferase CV_2253 from Chromobacterium violaceum (strain ATCC 12472 / DSM 30191 / JCM 1249 / CCUG 213 / NBRC 12614 / NCIMB 9131 / NCTC 9757 / MK).